The chain runs to 139 residues: uncharacterized protein (139 aa).

The next 2 membrane-spanning stretches (helical) occupy residues 71 to 91 (LFSA…ATLL) and 97 to 117 (ENEL…FVMV).

The protein belongs to the RseC family.

Its subcellular location is the cell inner membrane. This is an uncharacterized protein from Haemophilus influenzae (strain ATCC 51907 / DSM 11121 / KW20 / Rd).